We begin with the raw amino-acid sequence, 751 residues long: Leucine-rich repeat-containing protein 56 homolog (751 aa).

Residues 1–149 (MKKSTVLDAR…IDKSRDNGQL (149 aa)) are disordered. Over residues 13–22 (GPLPRRPQQP) the composition is skewed to pro residues. 2 stretches are compositionally biased toward polar residues: residues 28-39 (RNSSQVEKNNAR) and 60-87 (HSQSQSLDTSFAPNTNTTLGSTDVNLNS). 5 LRR repeats span residues 210–235 (MPQLNSLKLNNSRITELRVLGTNYAN), 236–256 (LRRLWISNCLVSSVSGVGACA), 258–279 (VLEELYASFNSISDIDALTEVS), 280–304 (STLQVVDLEGNDIRDTDMLKRTLPQ), and 307–328 (KMKHLVLKGNPVASSETIVELS). Disordered regions lie at residues 430-538 (SRSH…QRQQ), 645-698 (TCTH…EKDW), and 717-751 (EAALKERVQGSKEVDGGGLEKVESEDEEDVSPVVF). Polar residues-rich tracts occupy residues 456-471 (KNSQSTASSGDSTNQG) and 662-671 (QQEQPTTAGA). The span at 717-738 (EAALKERVQGSKEVDGGGLEKV) shows a compositional bias: basic and acidic residues. Positions 739–751 (ESEDEEDVSPVVF) are enriched in acidic residues.

It belongs to the LRRC56 family.

The protein localises to the cell projection. Its subcellular location is the cilium. It is found in the flagellum. Its function is as follows. Required for the assembly of dynein arms in the distal portion of flagellum axoneme. This Trypanosoma brucei brucei (strain 927/4 GUTat10.1) protein is Leucine-rich repeat-containing protein 56 homolog.